A 394-amino-acid chain; its full sequence is Elongation factor Tu (394 aa).

One can recognise a tr-type G domain in the interval 10–204; the sequence is KAHVNIGTIG…SVDSYIPTPT (195 aa). The interval 19–26 is G1; the sequence is GHIDHGKT. 19 to 26 provides a ligand contact to GTP; sequence GHIDHGKT. Thr26 contributes to the Mg(2+) binding site. Residues 60–64 are G2; it reads GITIN. A G3 region spans residues 81–84; that stretch reads DCPG. GTP-binding positions include 81–85 and 136–139; these read DCPGH and NKCD. Residues 136-139 form a G4 region; it reads NKCD. Residues 174–176 form a G5 region; the sequence is SAL.

The protein belongs to the TRAFAC class translation factor GTPase superfamily. Classic translation factor GTPase family. EF-Tu/EF-1A subfamily. As to quaternary structure, monomer.

Its subcellular location is the cytoplasm. The catalysed reaction is GTP + H2O = GDP + phosphate + H(+). Its function is as follows. GTP hydrolase that promotes the GTP-dependent binding of aminoacyl-tRNA to the A-site of ribosomes during protein biosynthesis. This is Elongation factor Tu from Malacoplasma penetrans (strain HF-2) (Mycoplasma penetrans).